Here is a 114-residue protein sequence, read N- to C-terminus: UPF0102 protein HPG27_782 (114 aa).

Belongs to the UPF0102 family.

This is UPF0102 protein HPG27_782 from Helicobacter pylori (strain G27).